The chain runs to 209 residues: Protein Sxy (209 aa).

It belongs to the Sxy/TfoX family.

Functionally, induces low levels of natural DNA uptake by inducing transcription of the competence genes (the CRP-S regulon) required for DNA transformation. Induction of the CRP-S regulon also requires Sxy-activated promoter (CRP-S), cAMP receptor protein (CRP) and cAMP. Induces CRP-S site-containing genes which are involved in genome maintenance and transcription or encoding transposases and toxin-antitoxin pairs. The chain is Protein Sxy from Escherichia coli (strain K12).